We begin with the raw amino-acid sequence, 458 residues long: Adenylosuccinate synthetase (458 aa).

GTP contacts are provided by residues 17–23 and 45–47; these read GDEGKGK and GHT. The Proton acceptor role is filled by aspartate 18. 2 residues coordinate Mg(2+): aspartate 18 and glycine 45. Residues 18 to 21, 43 to 46, threonine 137, arginine 151, glutamine 247, threonine 262, and arginine 330 each bind IMP; these read DEGK and NAGH. The active-site Proton donor is histidine 46. A substrate-binding site is contributed by 326–332; that stretch reads VTTGRSR. Residues arginine 332, 358–360, and 440–442 contribute to the GTP site; these read KLD and STS.

Belongs to the adenylosuccinate synthetase family. Homodimer. Requires Mg(2+) as cofactor.

Its subcellular location is the cytoplasm. It catalyses the reaction IMP + L-aspartate + GTP = N(6)-(1,2-dicarboxyethyl)-AMP + GDP + phosphate + 2 H(+). The protein operates within purine metabolism; AMP biosynthesis via de novo pathway; AMP from IMP: step 1/2. Its function is as follows. Plays an important role in the de novo pathway of purine nucleotide biosynthesis. Catalyzes the first committed step in the biosynthesis of AMP from IMP. The protein is Adenylosuccinate synthetase of Delftia acidovorans (strain DSM 14801 / SPH-1).